A 185-amino-acid polypeptide reads, in one-letter code: Threonylcarbamoyl-AMP synthase (185 aa).

One can recognise a YrdC-like domain in the interval 4-185 (SWRVQQAAQN…IATGQVMRAG (182 aa)).

The protein belongs to the SUA5 family. TsaC subfamily.

It is found in the cytoplasm. It catalyses the reaction L-threonine + hydrogencarbonate + ATP = L-threonylcarbamoyladenylate + diphosphate + H2O. Required for the formation of a threonylcarbamoyl group on adenosine at position 37 (t(6)A37) in tRNAs that read codons beginning with adenine. Catalyzes the conversion of L-threonine, HCO(3)(-)/CO(2) and ATP to give threonylcarbamoyl-AMP (TC-AMP) as the acyladenylate intermediate, with the release of diphosphate. The protein is Threonylcarbamoyl-AMP synthase of Pseudomonas syringae pv. tomato (strain ATCC BAA-871 / DC3000).